The chain runs to 489 residues: Glycogen synthase (489 aa).

An ADP-alpha-D-glucose-binding site is contributed by Lys-15.

The protein belongs to the glycosyltransferase 1 family. Bacterial/plant glycogen synthase subfamily.

The enzyme catalyses [(1-&gt;4)-alpha-D-glucosyl](n) + ADP-alpha-D-glucose = [(1-&gt;4)-alpha-D-glucosyl](n+1) + ADP + H(+). The protein operates within glycan biosynthesis; glycogen biosynthesis. In terms of biological role, synthesizes alpha-1,4-glucan chains using ADP-glucose. The polypeptide is Glycogen synthase (Francisella tularensis subsp. novicida (strain U112)).